The primary structure comprises 199 residues: Holliday junction branch migration complex subunit RuvA (199 aa).

The tract at residues 1–65 (MIASLRGKLL…DRGQRLFGFG (65 aa)) is domain I. A domain II region spans residues 66-144 (SKKDRESFEL…KFEMFLNEGT (79 aa)). Residues 145-155 (TESSFVDRETD) form a flexible linker region. The domain III stretch occupies residues 155–199 (DLATLALIQLGFDEKSATKQVADAKKLNPGLSASDIVKQVITGTR).

This sequence belongs to the RuvA family. In terms of assembly, homotetramer. Forms an RuvA(8)-RuvB(12)-Holliday junction (HJ) complex. HJ DNA is sandwiched between 2 RuvA tetramers; dsDNA enters through RuvA and exits via RuvB. An RuvB hexamer assembles on each DNA strand where it exits the tetramer. Each RuvB hexamer is contacted by two RuvA subunits (via domain III) on 2 adjacent RuvB subunits; this complex drives branch migration. In the full resolvosome a probable DNA-RuvA(4)-RuvB(12)-RuvC(2) complex forms which resolves the HJ.

The protein localises to the cytoplasm. In terms of biological role, the RuvA-RuvB-RuvC complex processes Holliday junction (HJ) DNA during genetic recombination and DNA repair, while the RuvA-RuvB complex plays an important role in the rescue of blocked DNA replication forks via replication fork reversal (RFR). RuvA specifically binds to HJ cruciform DNA, conferring on it an open structure. The RuvB hexamer acts as an ATP-dependent pump, pulling dsDNA into and through the RuvAB complex. HJ branch migration allows RuvC to scan DNA until it finds its consensus sequence, where it cleaves and resolves the cruciform DNA. The chain is Holliday junction branch migration complex subunit RuvA from Leptospira biflexa serovar Patoc (strain Patoc 1 / Ames).